A 1019-amino-acid polypeptide reads, in one-letter code: Outer capsid protein P3 (1019 aa).

Belongs to the phytoreovirus inner capsid protein P3 family. In terms of assembly, homodimer. Homomultimer.

The protein localises to the virion. The protein resides in the host cytoplasm. In terms of biological role, capsid protein which self-assembles to form the inner icosahedral capsid with a T=2 symmetry, and consisting of 60 P3 dimers. This Alopecurus aequalis (Barnyard grass) protein is Outer capsid protein P3.